The primary structure comprises 32 residues: Giant hemoglobin AIV chain (32 aa).

This sequence belongs to the globin family. As to quaternary structure, giant hemoglobin is composed of four heme-containing chains (AI to AIV), and two linker chains (AV and AVI).

The sequence is that of Giant hemoglobin AIV chain from Lamellibrachia sp. (Deep-sea giant tube worm).